The following is a 211-amino-acid chain: 3-demethoxyubiquinol 3-hydroxylase (211 aa).

Glu60, Glu90, His93, Glu142, Glu174, and His177 together coordinate Fe cation.

It belongs to the COQ7 family. It depends on Fe cation as a cofactor.

The protein resides in the cell membrane. It catalyses the reaction a 5-methoxy-2-methyl-3-(all-trans-polyprenyl)benzene-1,4-diol + AH2 + O2 = a 3-demethylubiquinol + A + H2O. The protein operates within cofactor biosynthesis; ubiquinone biosynthesis. Its function is as follows. Catalyzes the hydroxylation of 2-nonaprenyl-3-methyl-6-methoxy-1,4-benzoquinol during ubiquinone biosynthesis. This chain is 3-demethoxyubiquinol 3-hydroxylase, found in Acinetobacter baumannii (strain AB307-0294).